The following is a 198-amino-acid chain: Recombination protein RecR (198 aa).

The segment at 57–72 (CEKCNTFTEAQICEVC) adopts a C4-type zinc-finger fold. Residues 80-175 (TLLCVVETPA…AVTRLARGVP (96 aa)) enclose the Toprim domain.

This sequence belongs to the RecR family.

Functionally, may play a role in DNA repair. It seems to be involved in an RecBC-independent recombinational process of DNA repair. It may act with RecF and RecO. This chain is Recombination protein RecR, found in Paraburkholderia phytofirmans (strain DSM 17436 / LMG 22146 / PsJN) (Burkholderia phytofirmans).